We begin with the raw amino-acid sequence, 206 residues long: Ribosomal RNA small subunit methyltransferase G (206 aa).

S-adenosyl-L-methionine is bound by residues glycine 74, leucine 79, 125 to 126 (VE), and arginine 140.

The protein belongs to the methyltransferase superfamily. RNA methyltransferase RsmG family.

Its subcellular location is the cytoplasm. It catalyses the reaction guanosine(527) in 16S rRNA + S-adenosyl-L-methionine = N(7)-methylguanosine(527) in 16S rRNA + S-adenosyl-L-homocysteine. Specifically methylates the N7 position of guanine in position 527 of 16S rRNA. This is Ribosomal RNA small subunit methyltransferase G from Shewanella oneidensis (strain ATCC 700550 / JCM 31522 / CIP 106686 / LMG 19005 / NCIMB 14063 / MR-1).